The primary structure comprises 111 residues: DNA-binding protein MTH_1615 (111 aa).

Belongs to the PDCD5 family.

DNA-binding protein which can interact with a randomly chosen 20-mer of double-stranded DNA. This Methanothermobacter thermautotrophicus (strain ATCC 29096 / DSM 1053 / JCM 10044 / NBRC 100330 / Delta H) (Methanobacterium thermoautotrophicum) protein is DNA-binding protein MTH_1615.